The primary structure comprises 146 residues: uncharacterized protein (146 aa).

The region spanning 9–141 (VADIEKSLRH…FEKSLMKLQH (133 aa)) is the HTH marR-type domain. The segment at residues 55–78 (IGELSGKMYLACSTTTDLIDRMQK) is a DNA-binding region (H-T-H motif).

This is an uncharacterized protein from Bacillus subtilis (strain 168).